We begin with the raw amino-acid sequence, 246 residues long: Breast cancer metastasis-suppressor 1 (246 aa).

Positions M1–R57 are disordered. Acidic residues-rich tracts occupy residues E11 to E32 and E40 to D52. Residues E51 to A98 are a coiled coil. Glycyl lysine isopeptide (Lys-Gly) (interchain with G-Cter in SUMO2) cross-links involve residues K184 and K242.

The protein belongs to the BRMS1 family. As to quaternary structure, homohexamer (Potential). Interacts with SNX6, HDAC1 and RELA. Interacts with ARID4A. Identified in mSin3A corepressor complexes together with SIN3A, SIN3B, RBBP4, RBBP7, SAP30, SUDS3, ARID4A, HDAC1 and HDAC2. Interacts with SPOP; this recruits the protein to a ubiquitin ligase complex containing SPOP and CUL3. In terms of processing, ubiquitinated by a cullin-RING-based BCR (BTB-CUL3-RBX1) E3 ubiquitin-protein ligase complex containing SPOP, leading to proteasomal degradation. In terms of tissue distribution, expression levels are higher in term placentas than in early placentas. Low levels of expression observed in normal pregnancies and in molar pregnancies.

The protein localises to the nucleus. It is found in the cytoplasm. Its function is as follows. Transcriptional repressor. Down-regulates transcription activation by NF-kappa-B by promoting the deacetylation of RELA at 'Lys-310'. Promotes HDAC1 binding to promoter regions. Down-regulates expression of anti-apoptotic genes that are controlled by NF-kappa-B. Promotes apoptosis in cells that have inadequate adherence to a substrate, a process called anoikis, and may thereby inhibit metastasis. May be a mediator of metastasis suppression in breast carcinoma. This chain is Breast cancer metastasis-suppressor 1 (BRMS1), found in Homo sapiens (Human).